A 641-amino-acid chain; its full sequence is WW domain-binding protein 11 (641 aa).

Over residues 1–11 (MGRRSTSSTKS) the composition is skewed to polar residues. A disordered region spans residues 1 to 37 (MGRRSTSSTKSGKFMNPTDQARKEARKRELKKNKKQR). Residues 1-45 (MGRRSTSSTKSGKFMNPTDQARKEARKRELKKNKKQRMMVRAAVL) form a required for nuclear import region. K13 carries the post-translational modification N6-acetyllysine. A compositionally biased stretch (basic residues) spans 28–37 (RELKKNKKQR). The stretch at 75–133 (EKVLKDKRKKLRETFERILRLYEKENPDIYKELRKLEVEYEQKRAQLSQYFDAVKNAQH) forms a coiled coil. The residue at position 181 (S181) is a Phosphoserine. The interval 186 to 213 (LGHGVPRLPPGRKPPGPPPGPPPPQVVQ) is disordered. R192 carries the post-translational modification Omega-N-methylarginine. Positions 192–210 (RLPPGRKPPGPPPGPPPPQ) are enriched in pro residues. Residues 217-221 (RKVGF) are interaction with PP1. The residue at position 236 (Y236) is a Phosphotyrosine. The segment at 236–552 (YSPELAQRGH…RPKADDTSAA (317 aa)) is disordered. S237 is subject to Phosphoserine. Over residues 253–263 (SEDDGYPEDMD) the composition is skewed to acidic residues. Residues 276-304 (TDKSDGESDGDEFVHRDNGERDNNEEKKS) show a composition bias toward basic and acidic residues. Phosphoserine occurs at positions 279 and 283. Residues 306–310 (LSVRF) are interaction with PP1. Residues 351–365 (EFSEDDDEDDSDDSE) are compositionally biased toward acidic residues. 3 positions are modified to phosphoserine: S353, S361, and S364. Positions 366–380 (AEKQSQKQHKEESHS) are enriched in basic and acidic residues. Low complexity predominate over residues 386–404 (ASSQQQAPPQSVPPSQIQA). Composition is skewed to pro residues over residues 405 to 447 (PPMP…PPGM), 456 to 504 (RLLP…PPRP), and 510 to 530 (PLVPPLGPAPPGLFPPAPLPN). Positions 455-466 (PRLLPPGPPPGR) match the PGR motif. A Glycyl lysine isopeptide (Lys-Gly) (interchain with G-Cter in SUMO2) cross-link involves residue K557. Residue K565 is modified to N6-acetyllysine. Residue K572 forms a Glycyl lysine isopeptide (Lys-Gly) (interchain with G-Cter in SUMO2) linkage. Residues 587–623 (RENKGATAAPQRKSEDDSAVPLAKAAPKSGPSVPVSV) form a disordered region. S600 carries the phosphoserine modification.

As to quaternary structure, interacts with PPP1CA, PPP1CB and PPP1CC. Interacts via the PGR motif with PQBP1 in the nucleus. Interacts with the WW domains of WBP4. In terms of tissue distribution, ubiquitous. Highly expressed in the heart, pancreas, kidney skeletal muscle, placenta and brain (at protein level). Weakly expressed in liver and lung.

The protein localises to the nucleus. It is found in the cytoplasm. Functionally, activates pre-mRNA splicing. May inhibit PP1 phosphatase activity. The polypeptide is WW domain-binding protein 11 (Homo sapiens (Human)).